Here is a 486-residue protein sequence, read N- to C-terminus: Ribosomal RNA small subunit methyltransferase F (486 aa).

S-adenosyl-L-methionine-binding positions include alanine 124–lysine 130, glutamate 148, aspartate 175, and aspartate 193. Cysteine 246 (nucleophile) is an active-site residue.

This sequence belongs to the class I-like SAM-binding methyltransferase superfamily. RsmB/NOP family.

The protein localises to the cytoplasm. The enzyme catalyses cytidine(1407) in 16S rRNA + S-adenosyl-L-methionine = 5-methylcytidine(1407) in 16S rRNA + S-adenosyl-L-homocysteine + H(+). In terms of biological role, specifically methylates the cytosine at position 1407 (m5C1407) of 16S rRNA. The protein is Ribosomal RNA small subunit methyltransferase F of Shewanella baltica (strain OS223).